A 429-amino-acid chain; its full sequence is UDP-N-acetylglucosamine 1-carboxyvinyltransferase (429 aa).

22–23 (KN) serves as a coordination point for phosphoenolpyruvate. Arginine 102 is a binding site for UDP-N-acetyl-alpha-D-glucosamine. Cysteine 126 functions as the Proton donor in the catalytic mechanism. Cysteine 126 carries the 2-(S-cysteinyl)pyruvic acid O-phosphothioketal modification. UDP-N-acetyl-alpha-D-glucosamine contacts are provided by residues 131–135 (RPVDL), aspartate 316, and isoleucine 338.

This sequence belongs to the EPSP synthase family. MurA subfamily.

The protein resides in the cytoplasm. It carries out the reaction phosphoenolpyruvate + UDP-N-acetyl-alpha-D-glucosamine = UDP-N-acetyl-3-O-(1-carboxyvinyl)-alpha-D-glucosamine + phosphate. The protein operates within cell wall biogenesis; peptidoglycan biosynthesis. Cell wall formation. Adds enolpyruvyl to UDP-N-acetylglucosamine. This is UDP-N-acetylglucosamine 1-carboxyvinyltransferase from Rhodopseudomonas palustris (strain BisA53).